The following is a 318-amino-acid chain: Isoflavone reductase (318 aa).

NADP(+) contacts are provided by residues 11-17, Arg-36, and Lys-44; that span reads GPTGAIG. Lys-144 acts as the Proton acceptor in catalysis. Arg-148 serves as a coordination point for NADP(+).

Belongs to the NmrA-type oxidoreductase family. Isoflavone reductase subfamily.

The enzyme catalyses (3R)-vestitone + NADP(+) = 2'-hydroxyformononetin + NADPH + 2 H(+). It functions in the pathway phytoalexin biosynthesis; pterocarpan phytoalexin biosynthesis. Reduces achiral isoflavones to chiral isoflavanones during the biosynthesis of chiral pterocarpan phytoalexins. The protein is Isoflavone reductase (IFR) of Cicer arietinum (Chickpea).